The sequence spans 137 residues: Peptide methionine sulfoxide reductase MsrB (137 aa).

Residues Pro-7 to Glu-129 enclose the MsrB domain. Cys-46, Cys-49, Cys-95, and Cys-98 together coordinate Zn(2+). Cys-118 (nucleophile) is an active-site residue.

This sequence belongs to the MsrB Met sulfoxide reductase family. It depends on Zn(2+) as a cofactor.

It catalyses the reaction L-methionyl-[protein] + [thioredoxin]-disulfide + H2O = L-methionyl-(R)-S-oxide-[protein] + [thioredoxin]-dithiol. In Klebsiella pneumoniae (strain 342), this protein is Peptide methionine sulfoxide reductase MsrB.